A 103-amino-acid polypeptide reads, in one-letter code: Large ribosomal subunit protein uL24 (103 aa).

Belongs to the universal ribosomal protein uL24 family. As to quaternary structure, part of the 50S ribosomal subunit.

Functionally, one of two assembly initiator proteins, it binds directly to the 5'-end of the 23S rRNA, where it nucleates assembly of the 50S subunit. One of the proteins that surrounds the polypeptide exit tunnel on the outside of the subunit. The protein is Large ribosomal subunit protein uL24 of Endomicrobium trichonymphae.